We begin with the raw amino-acid sequence, 440 residues long: MVSSSPVSPSKETDRKSGEKWTAEDPSRPAKWWYSTFHTVTAMIGAGVLSLPYAMAYLGWGPGTFVLAMTWGLTLNTMWQMVQLHECVPGTRFDRYIDLGRYAFGPKLGPWIVLPQQLIVQVGCNIVYMVTGGKCLKQFVEITCSTCTPVRQSYWILGFGGVHFILSQLPNFNSVAGVSLAAAVMSLCYSTIAWGGSIAHGRVPDVSYDYKATNPGDFTFRVFNALGQISFAFAGHAVALEIQATMPSTPERPSKVPMWQGVIGAYVVNAVCYFPVALICYWAFGQDVDDNVLMNLQRPAWLIAAANLMVVVHVIGSYQVFAMPVFDLLERMMVNKFGFKHGVVLRFFTRTIYVAFTLFIGVSFPFFGDLLGFFGGFGFAPTSFFLPSIMWLIIKKPRRFSVTWFVNWISIIVGVFIMLASTIGGLRNIIADSSTYSFYA.

Residues 1-10 (MVSSSPVSPS) are compositionally biased toward polar residues. Residues 1–25 (MVSSSPVSPSKETDRKSGEKWTAED) are disordered. Over 1 to 31 (MVSSSPVSPSKETDRKSGEKWTAEDPSRPAK) the chain is Cytoplasmic. Residues 11–25 (KETDRKSGEKWTAED) show a composition bias toward basic and acidic residues. The helical transmembrane segment at 32-51 (WWYSTFHTVTAMIGAGVLSL) threads the bilayer. At 52–61 (PYAMAYLGWG) the chain is on the extracellular side. A helical transmembrane segment spans residues 62 to 82 (PGTFVLAMTWGLTLNTMWQMV). The Cytoplasmic segment spans residues 83–109 (QLHECVPGTRFDRYIDLGRYAFGPKLG). The helical transmembrane segment at 110 to 130 (PWIVLPQQLIVQVGCNIVYMV) threads the bilayer. Over 131 to 152 (TGGKCLKQFVEITCSTCTPVRQ) the chain is Extracellular. A helical transmembrane segment spans residues 153-173 (SYWILGFGGVHFILSQLPNFN). Position 174 (Ser174) is a topological domain, cytoplasmic. Residues 175-195 (VAGVSLAAAVMSLCYSTIAWG) traverse the membrane as a helical segment. Topologically, residues 196–221 (GSIAHGRVPDVSYDYKATNPGDFTFR) are extracellular. Residues 222-242 (VFNALGQISFAFAGHAVALEI) traverse the membrane as a helical segment. At 243 to 261 (QATMPSTPERPSKVPMWQG) the chain is on the cytoplasmic side. Residues 262–282 (VIGAYVVNAVCYFPVALICYW) form a helical membrane-spanning segment. The Extracellular segment spans residues 283 to 300 (AFGQDVDDNVLMNLQRPA). A helical transmembrane segment spans residues 301–321 (WLIAAANLMVVVHVIGSYQVF). The Cytoplasmic segment spans residues 322–353 (AMPVFDLLERMMVNKFGFKHGVVLRFFTRTIY). The next 2 membrane-spanning stretches (helical) occupy residues 354–374 (VAFTLFIGVSFPFFGDLLGFF) and 375–395 (GGFGFAPTSFFLPSIMWLIIK). Residues 396–399 (KPRR) lie on the Cytoplasmic side of the membrane. Residues 400–420 (FSVTWFVNWISIIVGVFIMLA) form a helical membrane-spanning segment. Residues 421–440 (STIGGLRNIIADSSTYSFYA) are Extracellular-facing.

The protein belongs to the amino acid/polyamine transporter 2 family. Amino acid/auxin permease (AAAP) (TC 2.A.18.2) subfamily.

The protein resides in the cell membrane. Functionally, amino acid transporter. This chain is Lysine histidine transporter-like 6, found in Arabidopsis thaliana (Mouse-ear cress).